Reading from the N-terminus, the 313-residue chain is Iron-sulfur protein required for NADH dehydrogenase, mitochondrial (313 aa).

The transit peptide at 1–22 directs the protein to the mitochondrion; it reads MATVALLRSLRRRELHAAHISA. 51 to 58 is a binding site for ATP; sequence GKGGVGKS.

Belongs to the Mrp/NBP35 ATP-binding proteins family. [4Fe-4S] cluster serves as cofactor.

It is found in the mitochondrion matrix. Essential during early vegetative growth. Required for the assembly of the mitochondrial membrane respiratory chain NADH dehydrogenase (Complex I). Involved in mitochondrial translation activity. May deliver of one or more Fe-S clusters to complex I subunits. This is Iron-sulfur protein required for NADH dehydrogenase, mitochondrial from Arabidopsis thaliana (Mouse-ear cress).